The following is a 238-amino-acid chain: Orotidine 5'-phosphate decarboxylase (238 aa).

Substrate is bound by residues Asp-13, Lys-35, 62–71 (DLKFHDIPNT), Thr-121, Arg-182, Gln-191, Gly-211, and Arg-212. Lys-64 serves as the catalytic Proton donor.

This sequence belongs to the OMP decarboxylase family. Type 1 subfamily. As to quaternary structure, homodimer.

It catalyses the reaction orotidine 5'-phosphate + H(+) = UMP + CO2. It participates in pyrimidine metabolism; UMP biosynthesis via de novo pathway; UMP from orotate: step 2/2. In terms of biological role, catalyzes the decarboxylation of orotidine 5'-monophosphate (OMP) to uridine 5'-monophosphate (UMP). The protein is Orotidine 5'-phosphate decarboxylase of Saccharophagus degradans (strain 2-40 / ATCC 43961 / DSM 17024).